A 150-amino-acid chain; its full sequence is NADH-quinone oxidoreductase subunit A (150 aa).

A run of 3 helical transmembrane segments spans residues 14–34 (WAFA…LLGA), 70–90 (LVAM…AWAV), and 98–118 (LGFI…FYLV).

The protein belongs to the complex I subunit 3 family. NDH-1 is composed of 13 different subunits. Subunits NuoA, H, J, K, L, M, N constitute the membrane sector of the complex.

The protein localises to the cell inner membrane. The catalysed reaction is a quinone + NADH + 5 H(+)(in) = a quinol + NAD(+) + 4 H(+)(out). In terms of biological role, NDH-1 shuttles electrons from NADH, via FMN and iron-sulfur (Fe-S) centers, to quinones in the respiratory chain. The immediate electron acceptor for the enzyme in this species is believed to be ubiquinone. Couples the redox reaction to proton translocation (for every two electrons transferred, four hydrogen ions are translocated across the cytoplasmic membrane), and thus conserves the redox energy in a proton gradient. This chain is NADH-quinone oxidoreductase subunit A, found in Proteus mirabilis (strain HI4320).